The primary structure comprises 237 residues: Large ribosomal subunit protein uL1 (237 aa).

The protein belongs to the universal ribosomal protein uL1 family. Part of the 50S ribosomal subunit.

Functionally, binds directly to 23S rRNA. The L1 stalk is quite mobile in the ribosome, and is involved in E site tRNA release. In terms of biological role, protein L1 is also a translational repressor protein, it controls the translation of the L11 operon by binding to its mRNA. In Corynebacterium kroppenstedtii (strain DSM 44385 / JCM 11950 / CIP 105744 / CCUG 35717), this protein is Large ribosomal subunit protein uL1.